The chain runs to 468 residues: UDP-N-acetylmuramoyl-L-alanine--L-glutamate ligase (468 aa).

122 to 128 lines the ATP pocket; sequence GTKGKST.

It belongs to the MurCDEF family. MurD2 subfamily.

It localises to the cytoplasm. The enzyme catalyses UDP-N-acetyl-alpha-D-muramoyl-L-alanine + L-glutamate + ATP = UDP-N-acetyl-alpha-D-muramoyl-L-alanyl-L-glutamate + ADP + phosphate + H(+). It functions in the pathway cell wall biogenesis; peptidoglycan biosynthesis. Cell wall formation. Catalyzes the addition of L-glutamate to the nucleotide precursor UDP-N-acetylmuramoyl-L-alanine. Has weak activity with D-glutamate. This Xanthomonas oryzae pv. oryzae (strain MAFF 311018) protein is UDP-N-acetylmuramoyl-L-alanine--L-glutamate ligase.